Consider the following 215-residue polypeptide: Probable peptidyl-prolyl cis-trans isomerase (215 aa).

The region spanning 38 to 197 is the PPIase cyclophilin-type domain; sequence DGIYAVMETN…RRGAAAKRFV (160 aa).

Belongs to the cyclophilin-type PPIase family.

It carries out the reaction [protein]-peptidylproline (omega=180) = [protein]-peptidylproline (omega=0). Functionally, PPIases accelerate the folding of proteins. It catalyzes the cis-trans isomerization of proline imidic peptide bonds in oligopeptides. This is Probable peptidyl-prolyl cis-trans isomerase (ppiB) from Treponema pallidum (strain Nichols).